Consider the following 377-residue polypeptide: Palmitoyltransferase ZDHHC16 (377 aa).

The Cytoplasmic segment spans residues 1 to 79 (MRGQWSLLLG…WLVDNVIRWC (79 aa)). A helical transmembrane segment spans residues 80 to 100 (GVVFVVLVIVLTSSIVAIAYL). Topologically, residues 101–116 (CVLPLILQTYSVPRLC) are lumenal. Residues 117 to 137 (WHFFYSHWNLILIVFHYYQAI) form a helical membrane-spanning segment. Topologically, residues 138–198 (TTPPGYPPQG…NNCVGHYNHR (61 aa)) are cytoplasmic. In terms of domain architecture, DHHC spans 155–205 (SICKKCINPKPARTHHCSICNRCVLKMDHHCPWLNNCVGHYNHRYFFSFCF). Cysteine 185 acts as the S-palmitoyl cysteine intermediate in catalysis. The helical transmembrane segment at 199–219 (YFFSFCFFMTLGCVYCSYGSW) threads the bilayer. Residues 220-266 (DLFREAYAAIEKMKQLDKNKLQAVANQTYHQTPPPTFSFRERVTHKS) lie on the Lumenal side of the membrane. A helical membrane pass occupies residues 267 to 287 (LVYLWFLCSSVALALGALTIW). Residues 288 to 377 (HAVLISRGET…TAHSASVMAV (90 aa)) lie on the Cytoplasmic side of the membrane.

This sequence belongs to the DHHC palmitoyltransferase family. As to quaternary structure, interacts with ABL1. Interacts with COPS5/JAB1.

The protein resides in the endoplasmic reticulum membrane. The enzyme catalyses L-cysteinyl-[protein] + hexadecanoyl-CoA = S-hexadecanoyl-L-cysteinyl-[protein] + CoA. Palmitoyl acyltransferase that mediates palmitoylation of proteins such as PLN and ZDHHC6. Required during embryonic heart development and cardiac function, possibly by mediating palmitoylation of PLN, thereby affecting PLN phosphorylation and homooligomerization. Also required for eye development. Palmitoylates ZDHHC6, affecting the quaternary assembly of ZDHHC6, its localization, stability and function. May play a role in DNA damage response. May be involved in apoptosis regulation. Involved in the proliferation of neural stem cells by regulating the FGF/ERK pathway. In Bos taurus (Bovine), this protein is Palmitoyltransferase ZDHHC16.